A 521-amino-acid chain; its full sequence is Colicin-E1* (521 aa).

2 disordered regions span residues 26 to 52 (NGNP…AAIH) and 127 to 163 (SGCA…EKEQ). Over residues 30–42 (DGSGSGGGGGTGG) the composition is skewed to gly residues. Basic residues predominate over residues 133 to 145 (KQKKKPVKKRKRA). A compositionally biased stretch (basic and acidic residues) spans 146-163 (EKSFQEAEQRRKEIEKEQ). A run of 2 helical transmembrane segments spans residues 470–486 (AVDA…FSVL) and 493–509 (IWGI…FIDK).

Belongs to the channel forming colicin family.

The protein resides in the cell membrane. This colicin is a channel-forming colicin. This class of transmembrane toxins depolarize the cytoplasmic membrane, leading to dissipation of cellular energy. In terms of biological role, colicins are polypeptide toxins produced by and active against E.coli and closely related bacteria. This Shigella sonnei protein is Colicin-E1* (cea).